Reading from the N-terminus, the 357-residue chain is 3-isopropylmalate dehydrogenase (357 aa).

Position 77-90 (Gly-77–Glu-90) interacts with NAD(+). Residues Arg-97, Arg-107, Arg-136, and Asp-224 each contribute to the substrate site. Mg(2+) contacts are provided by Asp-224, Asp-248, and Asp-252. Gly-282 to Asn-294 contacts NAD(+).

This sequence belongs to the isocitrate and isopropylmalate dehydrogenases family. LeuB type 1 subfamily. As to quaternary structure, homodimer. The cofactor is Mg(2+). It depends on Mn(2+) as a cofactor.

Its subcellular location is the cytoplasm. It catalyses the reaction (2R,3S)-3-isopropylmalate + NAD(+) = 4-methyl-2-oxopentanoate + CO2 + NADH. The protein operates within amino-acid biosynthesis; L-leucine biosynthesis; L-leucine from 3-methyl-2-oxobutanoate: step 3/4. Catalyzes the oxidation of 3-carboxy-2-hydroxy-4-methylpentanoate (3-isopropylmalate) to 3-carboxy-4-methyl-2-oxopentanoate. The product decarboxylates to 4-methyl-2 oxopentanoate. This chain is 3-isopropylmalate dehydrogenase, found in Clostridium acetobutylicum (strain ATCC 824 / DSM 792 / JCM 1419 / IAM 19013 / LMG 5710 / NBRC 13948 / NRRL B-527 / VKM B-1787 / 2291 / W).